The sequence spans 153 residues: MAQEGGAVEQFGQWLWSNPIEQDPDDEMVDAREEEGQILYLDQQAGLRYSYSQLTTLKPTPPGQSNSAPVYRNAQRFQTEYSSPTIVTRSQVSELSLSHTRPPIRQALSLLSSTPRASNQPWVATLIPSPSARPPPRPSGQRQLMGRNSRNQR.

Disordered stretches follow at residues 1–24 (MAQE…EQDP) and 107–153 (ALSL…RNQR). 2 stretches are compositionally biased toward polar residues: residues 109-122 (SLLS…NQPW) and 140-153 (GQRQ…RNQR).

Belongs to the luteoviruses movement protein family.

The protein resides in the host nucleus envelope. Its function is as follows. Transports viral genome to neighboring plant cells directly through plasmosdesmata, without any budding. The movement protein allows efficient cell to cell propagation, by bypassing the host cell wall barrier. Acts as a suppressor of RNA-mediated gene silencing, also known as post-transcriptional gene silencing (PTGS), a mechanism of plant viral defense that limits the accumulation of viral RNAs. In Avena byzantina (Oat), this protein is Movement protein.